Reading from the N-terminus, the 466-residue chain is MSDINHAGSDLIFELEDRPPFHQALVGAITHLLAIFVPMVTPALIVGAALQLSAETTAYLVSMAMIASGIGTWLQVNRYGIVGSGLLSIQSVNFSFVTVMIALGSSMKSDGFHEELIMSSLLGVSFVGAFLVVGSSFILPYLRRVITPTVSGIVVLMIGLSLIKVGIIDFGGGFAAKSSGTFGNYEHLGVGLLVLIVVIGFNCCRSPLLRMGGIAIGLCVGYIASLCLGMVDFSSMRNLPLITIPHPFKYGFSFSFHQFLVVGTIYLLSVLEAVGDITATAMVSRRPIQGEEYQSRLKGGVLADGLVSVIASAVGSLPLTTFAQNNGVIQMTGVASRYVGRTIAVMLVILGLFPMIGGFFTTIPSAVLGGAMTLMFSMIAIAGIRIIITNGLKRRETLIVATSLGLGLGVSYDPEIFKILPASIYVLVENPICAGGLTAILLNIILPGGYRQENVLPGITSAEEMD.

Topologically, residues 1–44 (MSDINHAGSDLIFELEDRPPFHQALVGAITHLLAIFVPMVTPAL) are cytoplasmic. The chain crosses the membrane as a helical span at residues 45–65 (IVGAALQLSAETTAYLVSMAM). At 66–74 (IASGIGTWL) the chain is on the periplasmic side. A helical transmembrane segment spans residues 75 to 95 (QVNRYGIVGSGLLSIQSVNFS). At 96–99 (FVTV) the chain is on the cytoplasmic side. Residues 100–120 (MIALGSSMKSDGFHEELIMSS) form a helical membrane-spanning segment. Residues 121–139 (LLGVSFVGAFLVVGSSFIL) lie on the Periplasmic side of the membrane. The chain crosses the membrane as a helical span at residues 140–160 (PYLRRVITPTVSGIVVLMIGL). At 161–170 (SLIKVGIIDF) the chain is on the cytoplasmic side. The chain crosses the membrane as a helical span at residues 171 to 191 (GGGFAAKSSGTFGNYEHLGVG). The Periplasmic segment spans residues 192–199 (LLVLIVVI). The chain crosses the membrane as a helical span at residues 200-220 (GFNCCRSPLLRMGGIAIGLCV). Residues 221 to 229 (GYIASLCLG) are Cytoplasmic-facing. Residues 230–250 (MVDFSSMRNLPLITIPHPFKY) form a helical membrane-spanning segment. Over 251–277 (GFSFSFHQFLVVGTIYLLSVLEAVGDI) the chain is Periplasmic. A helical membrane pass occupies residues 278-298 (TATAMVSRRPIQGEEYQSRLK). Residues 299–317 (GGVLADGLVSVIASAVGSL) lie on the Cytoplasmic side of the membrane. Residues 318 to 338 (PLTTFAQNNGVIQMTGVASRY) form a helical membrane-spanning segment. The Periplasmic portion of the chain corresponds to 339–361 (VGRTIAVMLVILGLFPMIGGFFT). Residues 362 to 382 (TIPSAVLGGAMTLMFSMIAIA) form a helical membrane-spanning segment. A topological domain (cytoplasmic) is located at residue glycine 383. The helical transmembrane segment at 384–403 (IRIIITNGLKRRETLIVATS) threads the bilayer. Topologically, residues 404–444 (LGLGLGVSYDPEIFKILPASIYVLVENPICAGGLTAILLNI) are periplasmic. The helical transmembrane segment at 445-465 (ILPGGYRQENVLPGITSAEEM) threads the bilayer. Aspartate 466 is a topological domain (cytoplasmic).

It belongs to the nucleobase:cation symporter-2 (NCS2) (TC 2.A.40) family.

It localises to the cell inner membrane. The enzyme catalyses xanthine(in) + H(+)(in) = xanthine(out) + H(+)(out). Functionally, specific, proton motive force-dependent high-affinity transporter for xanthine. In Escherichia coli O157:H7, this protein is Xanthine permease XanQ (xanQ).